The chain runs to 264 residues: NAD-capped RNA hydrolase NudC (264 aa).

Residue Arg70 participates in substrate binding. Zn(2+) contacts are provided by Cys99 and Cys102. Substrate is bound at residue Glu112. Zn(2+) is bound by residues Cys117 and Cys122. A substrate-binding site is contributed by Tyr127. In terms of domain architecture, Nudix hydrolase spans 128–252; sequence PVICPCIIVA…TIALKLIEHT (125 aa). 3 residues coordinate a divalent metal cation: Ala161, Glu177, and Glu181. The short motif at 162–183 is the Nudix box element; that stretch reads GFVEVGETFEQAVHREVLEETG. 195–202 is a substrate binding site; the sequence is QPWAFPNS. Residue Glu222 coordinates a divalent metal cation. Ala245 is a binding site for substrate.

This sequence belongs to the Nudix hydrolase family. NudC subfamily. Homodimer. Mg(2+) is required as a cofactor. Mn(2+) serves as cofactor. The cofactor is Zn(2+).

It carries out the reaction a 5'-end NAD(+)-phospho-ribonucleoside in mRNA + H2O = a 5'-end phospho-adenosine-phospho-ribonucleoside in mRNA + beta-nicotinamide D-ribonucleotide + 2 H(+). The catalysed reaction is NAD(+) + H2O = beta-nicotinamide D-ribonucleotide + AMP + 2 H(+). It catalyses the reaction NADH + H2O = reduced beta-nicotinamide D-ribonucleotide + AMP + 2 H(+). Its function is as follows. mRNA decapping enzyme that specifically removes the nicotinamide adenine dinucleotide (NAD) cap from a subset of mRNAs by hydrolyzing the diphosphate linkage to produce nicotinamide mononucleotide (NMN) and 5' monophosphate mRNA. The NAD-cap is present at the 5'-end of some mRNAs and stabilizes RNA against 5'-processing. Has preference for mRNAs with a 5'-end purine. Catalyzes the hydrolysis of a broad range of dinucleotide pyrophosphates. This is NAD-capped RNA hydrolase NudC from Pasteurella multocida (strain Pm70).